We begin with the raw amino-acid sequence, 397 residues long: P-selectin glycoprotein ligand 1 (397 aa).

The signal sequence occupies residues 1–17 (MSPSFLVLLTILGPGNS). Residues 18–41 (LQLQDPWGHETKEAPGPVHLRERR) constitute a propeptide that is removed on maturation. Residues 18–307 (LQLQDPWGHE…SSDLIPVKQC (290 aa)) are Extracellular-facing. At tyrosine 54 the chain carries Sulfotyrosine. Threonine 58 is a glycosylation site (O-linked (GalNAc...) threonine). Asparagine 66 is a glycosylation site (N-linked (GlcNAc...) asparagine). Residues 89–261 (TSAGTSERAT…TMETASTESN (173 aa)) form a disordered region. Over residues 120–198 (STDSATQWSL…PMEAETSQPA (79 aa)) the composition is skewed to polar residues. 10 repeat units span residues 126 to 135 (QWSLTSVETV), 136 to 145 (QPASTEVETS), 146 to 155 (QPAPMEAETS), 156 to 165 (QPAPMEAETS), 166 to 175 (QPAPMEAETS), 176 to 185 (QPAPMEADTS), 186 to 195 (QPAPMEAETS), 196 to 205 (QPAPNEAETS), 206 to 215 (KPAPTEAETS), and 216 to 225 (KPAPTEAETT). Positions 126–225 (QWSLTSVETV…KPAPTEAETT (100 aa)) are 10 X 10 AA tandem repeats. Over residues 236–261 (LFTTSAATEVPSTEPTTMETASTESN) the composition is skewed to polar residues. Asparagine 261 carries N-linked (GlcNAc...) asparagine glycosylation. The helical transmembrane segment at 308-328 (LLIILILASLATIFLVCTVVL) threads the bilayer. Topologically, residues 329-397 (AVRLSRKTHM…DDLTLHSFLP (69 aa)) are cytoplasmic. A disordered region spans residues 364–390 (PVTANGGLPKVQDLKTEPSGDRDGDDL). Positions 375 to 390 (QDLKTEPSGDRDGDDL) are enriched in basic and acidic residues. A Phosphothreonine modification is found at threonine 391. Phosphoserine is present on serine 394.

In terms of assembly, homodimer; disulfide-linked. Interacts with P- and E-selectins, through their lectin/EGF domains. Interaction with P-selectin requires sialyl Lewis X glycan modification and tyrosine sulfation, probably on Tyr-54, for high affinity binding. Dimerization appears not to be required for P-selectin/SELP binding. Interacts with SNX20. Interacts with MSN and SYK; mediates SYK activation downstream of SELPLG. Interacts with HAVCR1. Displays complex, core-2, sialylated and fucosylated O-linked oligosaccharides, at least some of which appear to contain poly-N-acetyllactosamine with varying degrees of substitution. Mainly disialylated or neutral forms of the core-2 tetrasaccharide, Galbeta1--&gt;4GlcNAcbeta1--&gt;6(Galbeta1--&gt;3)GalNAcOH. The GlcN:GalN ratio is approximately 2:1 and the Man:Fuc ratio 3:5. Contains about 14% fucose with alpha-1,3 linkage present in two forms: One species is a disialylated, monofucosylated glycan, and the other, a monosialylated, trifucosylated glycan with a polylactosamine backbone. The fucosylated forms carry the Lewis antigen and are important for interaction with selectins and for functioning. No sulfated O-glycans. Some N-glycosylation. In terms of tissue distribution, highly expressed in blood, bone marrow, brain, adipose tissue, spleen, and thymus. Also expressed in heart, kidney, liver, muscle, ovary, and stomach.

The protein localises to the cell membrane. An SLe(x)-type proteoglycan, which through high affinity, calcium-dependent interactions with E- and P-selectins, mediates rapid rolling of leukocytes over vascular surfaces during the initial steps in inflammation. Critical for the initial leukocyte capture. In Mus musculus (Mouse), this protein is P-selectin glycoprotein ligand 1 (Selplg).